The primary structure comprises 619 residues: Very-long-chain aldehyde decarbonylase GL1-1 (619 aa).

The next 5 membrane-spanning stretches (helical) occupy residues leucine 44–phenylalanine 64, aspartate 93–leucine 113, glycine 123–histidine 143, alanine 190–phenylalanine 210, and proline 322–serine 342. The Fatty acid hydroxylase domain occupies leucine 129 to threonine 269.

The protein belongs to the sterol desaturase family. Homodimer.

The protein localises to the endoplasmic reticulum membrane. It catalyses the reaction a long-chain fatty aldehyde + 2 NADPH + O2 + H(+) = a long-chain alkane + formate + 2 NADP(+) + H2O. Aldehyde decarbonylase involved in the conversion of aldehydes to alkanes. Core component of a very-long-chain alkane synthesis complex. This Oryza sativa subsp. indica (Rice) protein is Very-long-chain aldehyde decarbonylase GL1-1.